An 87-amino-acid polypeptide reads, in one-letter code: DNA-directed RNA polymerase subunit Rpo5 (87 aa).

It belongs to the archaeal Rpo5/eukaryotic RPB5 RNA polymerase subunit family. As to quaternary structure, part of the RNA polymerase complex.

The protein resides in the cytoplasm. The catalysed reaction is RNA(n) + a ribonucleoside 5'-triphosphate = RNA(n+1) + diphosphate. Its function is as follows. DNA-dependent RNA polymerase (RNAP) catalyzes the transcription of DNA into RNA using the four ribonucleoside triphosphates as substrates. This Thermoplasma acidophilum (strain ATCC 25905 / DSM 1728 / JCM 9062 / NBRC 15155 / AMRC-C165) protein is DNA-directed RNA polymerase subunit Rpo5.